The sequence spans 242 residues: 1-(5-phosphoribosyl)-5-[(5-phosphoribosylamino)methylideneamino] imidazole-4-carboxamide isomerase (242 aa).

The Proton acceptor role is filled by aspartate 10.

The protein belongs to the HisA/HisF family.

It is found in the cytoplasm. It catalyses the reaction 1-(5-phospho-beta-D-ribosyl)-5-[(5-phospho-beta-D-ribosylamino)methylideneamino]imidazole-4-carboxamide = 5-[(5-phospho-1-deoxy-D-ribulos-1-ylimino)methylamino]-1-(5-phospho-beta-D-ribosyl)imidazole-4-carboxamide. The protein operates within amino-acid biosynthesis; L-histidine biosynthesis; L-histidine from 5-phospho-alpha-D-ribose 1-diphosphate: step 4/9. The polypeptide is 1-(5-phosphoribosyl)-5-[(5-phosphoribosylamino)methylideneamino] imidazole-4-carboxamide isomerase (Corynebacterium diphtheriae (strain ATCC 700971 / NCTC 13129 / Biotype gravis)).